A 78-amino-acid polypeptide reads, in one-letter code: Delta-conotoxin-like TxMKLT1-0111 (78 aa).

Residues 1–22 (MKLTCMMIVAVLFLTAWTFATA) form the signal peptide. Residues 23 to 49 (DDSGNGLENLFSNAHHQMKNPEASKLN) constitute a propeptide that is removed on maturation. Intrachain disulfides connect Cys53/Cys68, Cys60/Cys72, and Cys67/Cys77.

It belongs to the conotoxin O1 superfamily. Expressed by the venom duct.

It is found in the secreted. In terms of biological role, delta-conotoxins bind to site 6 of voltage-gated sodium channels (Nav) and inhibit the inactivation process. This chain is Delta-conotoxin-like TxMKLT1-0111, found in Conus textile (Cloth-of-gold cone).